The primary structure comprises 180 residues: Molybdopterin synthase catalytic subunit (180 aa).

Residues 123–124 (HR), K139, and 146–148 (KLE) each bind substrate. Residues 161–180 (RDGQKGVKVEGGKEGVEAKH) form a disordered region.

It belongs to the MoaE family. MOCS2B subfamily. Heterotetramer; composed of 2 small (MOCS2A) and 2 large (MOCS2B) subunits.

The protein resides in the cytoplasm. The catalysed reaction is 2 [molybdopterin-synthase sulfur-carrier protein]-C-terminal-Gly-aminoethanethioate + cyclic pyranopterin phosphate + H2O = molybdopterin + 2 [molybdopterin-synthase sulfur-carrier protein]-C-terminal Gly-Gly + 2 H(+). The protein operates within cofactor biosynthesis; molybdopterin biosynthesis. In terms of biological role, catalytic subunit of the molybdopterin synthase complex, a complex that catalyzes the conversion of precursor Z into molybdopterin. Acts by mediating the incorporation of 2 sulfur atoms from thiocarboxylated MOCS2A into precursor Z to generate a dithiolene group. This Pyrenophora tritici-repentis (strain Pt-1C-BFP) (Wheat tan spot fungus) protein is Molybdopterin synthase catalytic subunit.